Reading from the N-terminus, the 954-residue chain is Valine--tRNA ligase (954 aa).

Residues proline 48–histidine 58 carry the 'HIGH' region motif. Positions lysine 560–serine 564 match the 'KMSKS' region motif. Residue lysine 563 coordinates ATP. Residues alanine 883 to leucine 954 adopt a coiled-coil conformation.

The protein belongs to the class-I aminoacyl-tRNA synthetase family. ValS type 1 subfamily. As to quaternary structure, monomer.

The protein resides in the cytoplasm. The catalysed reaction is tRNA(Val) + L-valine + ATP = L-valyl-tRNA(Val) + AMP + diphosphate. In terms of biological role, catalyzes the attachment of valine to tRNA(Val). As ValRS can inadvertently accommodate and process structurally similar amino acids such as threonine, to avoid such errors, it has a 'posttransfer' editing activity that hydrolyzes mischarged Thr-tRNA(Val) in a tRNA-dependent manner. This is Valine--tRNA ligase from Actinobacillus pleuropneumoniae serotype 5b (strain L20).